The primary structure comprises 130 residues: MAENQYYGTGRRKSSTARVFIKPGNGKIVINQRSLEQYFGRETARMVVRQPLELVDMVEKLDLYITVKGGGISGQAGAIRHGITRALMEYDESLRSELRKAGFVTRDARQVERKKVGLRKARRRPQFSKR.

Belongs to the universal ribosomal protein uS9 family.

In Shigella dysenteriae serotype 1 (strain Sd197), this protein is Small ribosomal subunit protein uS9.